A 90-amino-acid polypeptide reads, in one-letter code: Envelope protein US9 homolog (90 aa).

The Intravirion segment spans residues 1-63 (MEPLRLADAE…IRRRRRQTRA (63 aa)). A Di-leucine internalization motif motif is present at residues 12-13 (LL). The segment at 29–38 (EAYYTESDDE) is acidic. Residues 64 to 84 (AGFVAAFVLVALISGGLGALM) form a helical; Signal-anchor for type II membrane protein membrane-spanning segment. The Virion surface portion of the chain corresponds to 85–90 (CWLAYR).

Belongs to the alphaherpesvirinae envelope protein US9 family. Phosphorylated on serines within the acidic cluster. Phosphorylation determines whether endocytosed viral US9 traffics to the trans-Golgi network or recycles to the cell membrane.

It is found in the virion membrane. The protein localises to the host Golgi apparatus membrane. The protein resides in the host smooth endoplasmic reticulum membrane. Its subcellular location is the host cell membrane. Its function is as follows. Essential for the anterograde spread of the infection throughout the host nervous system. Together with the gE/gI heterodimer, US9 is involved in the sorting and transport of viral structural components toward axon tips. The chain is Envelope protein US9 homolog from Cercopithecine herpesvirus 1 (CeHV-1).